The primary structure comprises 482 residues: Signal recognition particle protein (482 aa).

GTP contacts are provided by residues 107 to 114 (GLQGTGKT), 189 to 193 (DTAGR), and 247 to 250 (TKLD). Disordered regions lie at residues 380 to 413 (MTTEERKNPDLLAKSPSRRRRIAQGSGHSETDVS) and 452 to 482 (FGGQPGPGFRGYRGGGGKPKKKKKKKGFGQL). Positions 452–468 (FGGQPGPGFRGYRGGGG) are enriched in gly residues. Over residues 469–482 (KPKKKKKKKGFGQL) the composition is skewed to basic residues.

The protein belongs to the GTP-binding SRP family. SRP54 subfamily. In terms of assembly, part of the signal recognition particle protein translocation system, which is composed of SRP and FtsY.

The protein localises to the cytoplasm. It carries out the reaction GTP + H2O = GDP + phosphate + H(+). Involved in targeting and insertion of nascent membrane proteins into the cytoplasmic membrane. Binds to the hydrophobic signal sequence of the ribosome-nascent chain (RNC) as it emerges from the ribosomes. The SRP-RNC complex is then targeted to the cytoplasmic membrane where it interacts with the SRP receptor FtsY. This chain is Signal recognition particle protein, found in Synechocystis sp. (strain ATCC 27184 / PCC 6803 / Kazusa).